Consider the following 705-residue polypeptide: Translation initiation factor IF-2 (705 aa).

The tract at residues 40–124 is disordered; it reads DDQIKALDKK…QPAAPKEIPS (85 aa). Residues 41–58 are compositionally biased toward basic and acidic residues; the sequence is DQIKALDKKFKKEQKNDN. Over residues 59–77 the composition is skewed to low complexity; sequence KQSTQNNHQKSNNQNQNKG. Basic residues predominate over residues 94-108; the sequence is KGNKKNNRNNKKNNK. The tr-type G domain occupies 207 to 376; sequence ERPAVVTIMG…GLVAEVQELK (170 aa). A G1 region spans residues 216–223; it reads GHVDHGKT. GTP is bound at residue 216 to 223; the sequence is GHVDHGKT. The segment at 241–245 is G2; it reads GITQH. The interval 262 to 265 is G3; it reads DTPG. GTP is bound by residues 262–266 and 316–319; these read DTPGH and NKID. Positions 316 to 319 are G4; that stretch reads NKID. Residues 352-354 are G5; the sequence is SAL.

The protein belongs to the TRAFAC class translation factor GTPase superfamily. Classic translation factor GTPase family. IF-2 subfamily.

It is found in the cytoplasm. In terms of biological role, one of the essential components for the initiation of protein synthesis. Protects formylmethionyl-tRNA from spontaneous hydrolysis and promotes its binding to the 30S ribosomal subunits. Also involved in the hydrolysis of GTP during the formation of the 70S ribosomal complex. The protein is Translation initiation factor IF-2 of Staphylococcus aureus (strain USA300).